Consider the following 252-residue polypeptide: Uracil-DNA glycosylase (252 aa).

Asp87 acts as the Proton acceptor in catalysis.

This sequence belongs to the uracil-DNA glycosylase (UDG) superfamily. UNG family.

It localises to the host nucleus. The enzyme catalyses Hydrolyzes single-stranded DNA or mismatched double-stranded DNA and polynucleotides, releasing free uracil.. In terms of biological role, excises uracil residues from the DNA which can arise as a result of misincorporation of dUMP residues by DNA polymerase or deamination of cytosines. Therefore may reduce deleterious uracil incorporation into the viral genome, particularly in terminally differentiated cells which lack DNA repair enzymes. The sequence is that of Uracil-DNA glycosylase (46) from Saimiri sciureus (Common squirrel monkey).